A 396-amino-acid chain; its full sequence is 2-(3-amino-3-carboxypropyl)histidine synthase subunit 1 (396 aa).

Positions 89, 194, and 323 each coordinate [4Fe-4S] cluster. Positions 372 to 396 (TNNNEANRPKREKRKPHIVVRTEAS) are disordered.

Belongs to the DPH1/DPH2 family. DPH1 subfamily. Component of the 2-(3-amino-3-carboxypropyl)histidine synthase complex composed of dph-1, dph-2, dph-3 and a NADH-dependent reductase. [4Fe-4S] cluster serves as cofactor.

The enzyme catalyses L-histidyl-[translation elongation factor 2] + S-adenosyl-L-methionine = 2-[(3S)-amino-3-carboxypropyl]-L-histidyl-[translation elongation factor 2] + S-methyl-5'-thioadenosine + H(+). It functions in the pathway protein modification; peptidyl-diphthamide biosynthesis. Functionally, catalyzes the first step of diphthamide biosynthesis, a post-translational modification of histidine which occurs in elongation factor 2. Dph-1 and dph-2 transfer a 3-amino-3-carboxypropyl (ACP) group from S-adenosyl-L-methionine (SAM) to a histidine residue, the reaction is assisted by a reduction system comprising dph-3 and a NADH-dependent reductase. The protein is 2-(3-amino-3-carboxypropyl)histidine synthase subunit 1 (dph-1) of Caenorhabditis elegans.